A 179-amino-acid chain; its full sequence is Protein GrpE (179 aa).

Over residues 1–10 (MSKKEEKQEE) the composition is skewed to basic and acidic residues. A disordered region spans residues 1–23 (MSKKEEKQEELQEEMEAVDAAGV).

It belongs to the GrpE family. As to quaternary structure, homodimer.

It is found in the cytoplasm. Participates actively in the response to hyperosmotic and heat shock by preventing the aggregation of stress-denatured proteins, in association with DnaK and GrpE. It is the nucleotide exchange factor for DnaK and may function as a thermosensor. Unfolded proteins bind initially to DnaJ; upon interaction with the DnaJ-bound protein, DnaK hydrolyzes its bound ATP, resulting in the formation of a stable complex. GrpE releases ADP from DnaK; ATP binding to DnaK triggers the release of the substrate protein, thus completing the reaction cycle. Several rounds of ATP-dependent interactions between DnaJ, DnaK and GrpE are required for fully efficient folding. This is Protein GrpE from Enterococcus faecalis (strain ATCC 700802 / V583).